The chain runs to 167 residues: SsrA-binding protein (167 aa).

Positions 137 to 167 (GKQSHDKRDAAKERDWQRDKQRVMRRHNRDA) are disordered. Residues 139–158 (QSHDKRDAAKERDWQRDKQR) show a composition bias toward basic and acidic residues.

It belongs to the SmpB family.

It is found in the cytoplasm. In terms of biological role, required for rescue of stalled ribosomes mediated by trans-translation. Binds to transfer-messenger RNA (tmRNA), required for stable association of tmRNA with ribosomes. tmRNA and SmpB together mimic tRNA shape, replacing the anticodon stem-loop with SmpB. tmRNA is encoded by the ssrA gene; the 2 termini fold to resemble tRNA(Ala) and it encodes a 'tag peptide', a short internal open reading frame. During trans-translation Ala-aminoacylated tmRNA acts like a tRNA, entering the A-site of stalled ribosomes, displacing the stalled mRNA. The ribosome then switches to translate the ORF on the tmRNA; the nascent peptide is terminated with the 'tag peptide' encoded by the tmRNA and targeted for degradation. The ribosome is freed to recommence translation, which seems to be the essential function of trans-translation. This chain is SsrA-binding protein, found in Xanthomonas campestris pv. campestris (strain 8004).